Here is a 398-residue protein sequence, read N- to C-terminus: Spermatogenesis associated 6-like protein (398 aa).

Residues 170-215 (KLNGPANNRKKKPKEKNSDQLSKGTPFWGPSPQRLHLHRPTQRNPG) are disordered. A phosphoserine mark is found at Ser-269 and Ser-272.

Belongs to the SPATA6 family.

The polypeptide is Spermatogenesis associated 6-like protein (Spata6l) (Rattus norvegicus (Rat)).